Here is a 64-residue protein sequence, read N- to C-terminus: Gallinacin-2 (64 aa).

The signal sequence occupies residues 1–22; the sequence is MRILYLLFSLLFLALQVSPGLS. Residues 23 to 28 constitute a propeptide that is removed on maturation; sequence SPRRDM. 3 disulfide bridges follow: Cys-31–Cys-57, Cys-36–Cys-51, and Cys-41–Cys-58.

In terms of tissue distribution, expressed in circulating heterophil granulocytes and bone marrow (at protein level). Strong expression in the bone marrow, lung and testis. Moderate expression in the bursa and intestine. Low expression in the cloaca, gall bladder, brain, pancreas, trachea, air sacs and spleen. Expressed in the vagina, ovarian stroma and the theca layer of the ovarian follicle, but not in the granulosa layer of the ovarian follicle.

It is found in the secreted. The protein localises to the cytoplasmic granule. Potent antibacterial activity against the Gram-negative bacterium E.coli ML-35, and against the Gram-positive bacterium L.monocytogenes EGD. Lacks antifungal activity against C.albicans. The chain is Gallinacin-2 (GAL2) from Gallus gallus (Chicken).